The primary structure comprises 155 residues: Reticulon-like protein B23 (155 aa).

The Reticulon domain occupies 1–155 (MGEMGKAIGL…LNRRNGEILD (155 aa)). A run of 2 helical transmembrane segments spans residues 30-50 (SLISDVLIVLLSSLAILGLLF) and 117-137 (IISGVTIAYAGLCLFCLSMLF).

Its subcellular location is the endoplasmic reticulum membrane. This is Reticulon-like protein B23 (RTNLB23) from Arabidopsis thaliana (Mouse-ear cress).